The sequence spans 474 residues: Probable protein phosphatase 2C 37 (474 aa).

The interval 1–90 (MVMASAGVNM…RDDDGCSSTA (90 aa)) is disordered. A compositionally biased stretch (low complexity) spans 57-77 (LPASSASPSPSPTSSAASSDC). Residues 113 to 470 (AFGSVSLAGR…DNISVVVIDL (358 aa)) enclose the PPM-type phosphatase domain. Residues Asp-152, Gly-153, and Asp-387 each contribute to the Mn(2+) site. The tract at residues 406 to 434 (LEDGSPTSGRRAARSGEAASSSAGAPAAA) is disordered. The span at 420-434 (SGEAASSSAGAPAAA) shows a compositional bias: low complexity. Asp-461 contributes to the Mn(2+) binding site.

The protein belongs to the PP2C family. Requires Mg(2+) as cofactor. It depends on Mn(2+) as a cofactor.

The enzyme catalyses O-phospho-L-seryl-[protein] + H2O = L-seryl-[protein] + phosphate. It carries out the reaction O-phospho-L-threonyl-[protein] + H2O = L-threonyl-[protein] + phosphate. In Oryza sativa subsp. japonica (Rice), this protein is Probable protein phosphatase 2C 37.